The following is a 162-amino-acid chain: uncharacterized protein (162 aa).

This is an uncharacterized protein from Acidianus sp. F28 (AFV-2).